The chain runs to 251 residues: Fibroblast growth factor 23 (251 aa).

Residues 1–24 (MLGTCLRLLVGVLCTVCSLGTARA) form the signal peptide. Residues Cys95 and Cys113 are joined by a disulfide bond. Residues Thr171 and Thr178 are each glycosylated (O-linked (GalNAc) threonine). Residues 175 to 251 (RRHTRSAEDP…DRCRPFPRFV (77 aa)) form a disordered region. A compositionally biased stretch (basic and acidic residues) spans 179–189 (RSAEDPPERDP). A Phosphoserine; by FAM20C modification is found at Ser180.

It belongs to the heparin-binding growth factors family. Interacts with FGFR1. Interacts with FGFR2, FGFR3 and FGFR4. Affinity between fibroblast growth factors (FGFs) and their receptors is increased by KL and heparan sulfate glycosaminoglycans that function as coreceptors. In terms of processing, following secretion this protein is inactivated by cleavage into a N-terminal fragment and a C-terminal fragment. The processing is effected by proprotein convertases. Post-translationally, O-glycosylated at Thr-171 and Thr-178 by GALNT3 and glycosylation of Thr-178 requires previous glycosylation at Thr171. Glycosylation is necessary for secretion; it blocks processing by proprotein convertases when the O-glycan is alpha 2,6-sialylated. Competition between proprotein convertase cleavage and block of cleavage by O-glycosylation determines the level of secreted active FGF23. Phosphorylation at Ser-180 mediated by FAM20C slows down glycosylation at Thr-178 notably. In terms of tissue distribution, mainly expressed in the brain and thymus at low levels. In brain; preferentially expressed in the ventrolateral thalamic nucleus.

Its subcellular location is the secreted. In terms of biological role, regulator of phosphate homeostasis. Inhibits renal tubular phosphate transport by reducing SLC34A1 levels. Acts directly on the parathyroid to decrease PTH secretion. Regulator of vitamin-D metabolism. Negatively regulates osteoblasts differentiation and matrix mineralization. Up-regulates EGR1 expression in the presence of KL. This is Fibroblast growth factor 23 (Fgf23) from Mus musculus (Mouse).